Here is a 249-residue protein sequence, read N- to C-terminus: Probable transcriptional regulatory protein Minf_0651 (249 aa).

It belongs to the TACO1 family.

The protein localises to the cytoplasm. This is Probable transcriptional regulatory protein Minf_0651 from Methylacidiphilum infernorum (isolate V4) (Methylokorus infernorum (strain V4)).